Consider the following 693-residue polypeptide: Polyribonucleotide nucleotidyltransferase (693 aa).

Mg(2+)-binding residues include aspartate 485 and aspartate 491. The 60-residue stretch at 552-611 (PRIETMQINTSKIATVIGPGGKQIRQIIERSGAQVDINDNGLINISANTQESIDKAKELI) folds into the KH domain. The 69-residue stretch at 621 to 689 (GKIYNGRVTS…EKGQLKLSHK (69 aa)) folds into the S1 motif domain.

It belongs to the polyribonucleotide nucleotidyltransferase family. Requires Mg(2+) as cofactor.

The protein resides in the cytoplasm. The enzyme catalyses RNA(n+1) + phosphate = RNA(n) + a ribonucleoside 5'-diphosphate. In terms of biological role, involved in mRNA degradation. Catalyzes the phosphorolysis of single-stranded polyribonucleotides processively in the 3'- to 5'-direction. The polypeptide is Polyribonucleotide nucleotidyltransferase (Chlamydia muridarum (strain MoPn / Nigg)).